Consider the following 230-residue polypeptide: Thioredoxin domain-containing protein PLP3B (230 aa).

The 85-residue stretch at 89 to 173 (VSEGDFLGEV…GIAMDRLVGF (85 aa)) folds into the Thioredoxin domain. The disordered stretch occupies residues 199–230 (EKRKEEDEEDYEYQESIRRSVRSSANVDSDSD). Over residues 220–230 (RSSANVDSDSD) the composition is skewed to polar residues.

It belongs to the phosducin family. As to quaternary structure, interacts with TUBB2, TUBB3, TUBB4 and TUBB5. In terms of tissue distribution, expressed in roots, cotyledons, leaves, stems and flowers.

The protein resides in the cytoplasm. It is found in the nucleus. Tubulin-binding protein involved in microtubule formation. The chain is Thioredoxin domain-containing protein PLP3B (PLP3B) from Arabidopsis thaliana (Mouse-ear cress).